Consider the following 1216-residue polypeptide: ATP-dependent helicase/nuclease subunit A (1216 aa).

Residues 26–488 enclose the UvrD-like helicase ATP-binding domain; the sequence is QKKTAEQIEA…IILKENFRSS (463 aa). 47-54 contacts ATP; sequence ASAGSGKT. One can recognise a UvrD-like helicase C-terminal domain in the interval 515–802; that stretch reads KHQLVFANTK…ELMTIHKSKG (288 aa).

It belongs to the helicase family. AddA subfamily. In terms of assembly, heterodimer of AddA and AddB/RexB. Mg(2+) serves as cofactor.

It carries out the reaction Couples ATP hydrolysis with the unwinding of duplex DNA by translocating in the 3'-5' direction.. It catalyses the reaction ATP + H2O = ADP + phosphate + H(+). In terms of biological role, the heterodimer acts as both an ATP-dependent DNA helicase and an ATP-dependent, dual-direction single-stranded exonuclease. Recognizes the chi site generating a DNA molecule suitable for the initiation of homologous recombination. The AddA nuclease domain is required for chi fragment generation; this subunit has the helicase and 3' -&gt; 5' nuclease activities. The sequence is that of ATP-dependent helicase/nuclease subunit A from Streptococcus pneumoniae serotype 2 (strain D39 / NCTC 7466).